The primary structure comprises 386 residues: Putative 8-amino-7-oxononanoate synthase (386 aa).

Arg-22 serves as a coordination point for substrate. Residue 109-110 (GY) participates in pyridoxal 5'-phosphate binding. Position 134 (His-134) interacts with substrate. Pyridoxal 5'-phosphate is bound by residues Ser-182, 207–210 (DEAH), and 238–241 (TLSK). Position 241 is an N6-(pyridoxal phosphate)lysine (Lys-241). Thr-356 is a binding site for substrate.

Belongs to the class-II pyridoxal-phosphate-dependent aminotransferase family. BioF subfamily. In terms of assembly, homodimer. The cofactor is pyridoxal 5'-phosphate.

It carries out the reaction 6-carboxyhexanoyl-[ACP] + L-alanine + H(+) = (8S)-8-amino-7-oxononanoate + holo-[ACP] + CO2. The protein operates within cofactor biosynthesis; biotin biosynthesis. In terms of biological role, catalyzes the decarboxylative condensation of pimeloyl-[acyl-carrier protein] and L-alanine to produce 8-amino-7-oxononanoate (AON), [acyl-carrier protein], and carbon dioxide. The chain is Putative 8-amino-7-oxononanoate synthase (bioF) from Nostoc sp. (strain PCC 7120 / SAG 25.82 / UTEX 2576).